The following is a 248-amino-acid chain: Type II restriction enzyme XhoI (248 aa).

Belongs to the XhoI type II restriction endonuclease family.

The enzyme catalyses Endonucleolytic cleavage of DNA to give specific double-stranded fragments with terminal 5'-phosphates.. A P subtype restriction enzyme that recognizes the double-stranded sequence 5'-CTCGAG-3' and cleaves after C-1. The sequence is that of Type II restriction enzyme XhoI from Xanthomonas vasicola.